We begin with the raw amino-acid sequence, 348 residues long: Anthranilate phosphoribosyltransferase (348 aa).

Residues G89, 92–93 (GD), T97, 99–102 (NIST), 117–125 (KHGNRSVSS), and S129 each bind 5-phospho-alpha-D-ribose 1-diphosphate. Position 89 (G89) interacts with anthranilate. Mg(2+) is bound at residue S101. Residue N120 participates in anthranilate binding. R175 contributes to the anthranilate binding site. The Mg(2+) site is built by D233 and E234.

The protein belongs to the anthranilate phosphoribosyltransferase family. In terms of assembly, homodimer. Requires Mg(2+) as cofactor.

It catalyses the reaction N-(5-phospho-beta-D-ribosyl)anthranilate + diphosphate = 5-phospho-alpha-D-ribose 1-diphosphate + anthranilate. It functions in the pathway amino-acid biosynthesis; L-tryptophan biosynthesis; L-tryptophan from chorismate: step 2/5. In terms of biological role, catalyzes the transfer of the phosphoribosyl group of 5-phosphorylribose-1-pyrophosphate (PRPP) to anthranilate to yield N-(5'-phosphoribosyl)-anthranilate (PRA). The chain is Anthranilate phosphoribosyltransferase from Shewanella sp. (strain W3-18-1).